Reading from the N-terminus, the 371-residue chain is Glutamate 5-kinase (371 aa).

Lys-11 contributes to the ATP binding site. The substrate site is built by Ser-52, Asp-139, and Asn-151. ATP is bound by residues 171–172 (TD) and 213–219 (TGGMATK). The PUA domain maps to 278–356 (EGSLTLDEGA…AEIPRILGYE (79 aa)).

It belongs to the glutamate 5-kinase family.

The protein localises to the cytoplasm. It carries out the reaction L-glutamate + ATP = L-glutamyl 5-phosphate + ADP. It participates in amino-acid biosynthesis; L-proline biosynthesis; L-glutamate 5-semialdehyde from L-glutamate: step 1/2. Functionally, catalyzes the transfer of a phosphate group to glutamate to form L-glutamate 5-phosphate. In Synechococcus sp. (strain JA-2-3B'a(2-13)) (Cyanobacteria bacterium Yellowstone B-Prime), this protein is Glutamate 5-kinase.